The chain runs to 179 residues: Auxin-responsive protein IAA15 (179 aa).

Positions 21 to 25 (LTLAL) match the EAR-like (transcriptional repression) motif. The 88-residue stretch at 86-173 (RKYVKVALDG…SCKRMRLMKT (88 aa)) folds into the PB1 domain.

This sequence belongs to the Aux/IAA family. In terms of assembly, homodimers and heterodimers.

Its subcellular location is the nucleus. Aux/IAA proteins are short-lived transcriptional factors that function as repressors of early auxin response genes at low auxin concentrations. Repression is thought to result from the interaction with auxin response factors (ARFs), proteins that bind to the auxin-responsive promoter element (AuxRE). Formation of heterodimers with ARF proteins may alter their ability to modulate early auxin response genes expression. The chain is Auxin-responsive protein IAA15 (IAA15) from Arabidopsis thaliana (Mouse-ear cress).